Consider the following 361-residue polypeptide: POU domain, class 3, transcription factor 4-A (361 aa).

3 disordered regions span residues histidine 100–isoleucine 131, leucine 150–proline 189, and glutamate 333–leucine 361. Over residues alanine 119–isoleucine 131 the composition is skewed to polar residues. A compositionally biased stretch (basic and acidic residues) spans valine 165–histidine 183. The POU-specific domain occupies glutamate 186–aspartate 260. Positions lysine 278–threonine 337 form a DNA-binding region, homeobox.

This sequence belongs to the POU transcription factor family. Class-3 subfamily. From embryonic stage 10, expressed in the Spemann's organizer. During gastrulation, expressed in both the involuting mesoderm and the overlying neuroectoderm. During the neural plate and neural fold stages, expressed in the entire neuroectoderm with expression in discrete regions of the developing nervous system persisting at later stages. Transiently expressed in the pronephros from stages 24-32. In adults, expressed in the kidney and brain.

The protein localises to the nucleus. Its function is as follows. Transcriptional activator. Induces neural-specific gene expression to act as a key regulator of neural differentiation. In Xenopus laevis (African clawed frog), this protein is POU domain, class 3, transcription factor 4-A (pou3f4-a).